We begin with the raw amino-acid sequence, 330 residues long: Ribosomal RNA small subunit methyltransferase C (330 aa).

This sequence belongs to the methyltransferase superfamily. RsmC family. As to quaternary structure, monomer.

Its subcellular location is the cytoplasm. It catalyses the reaction guanosine(1207) in 16S rRNA + S-adenosyl-L-methionine = N(2)-methylguanosine(1207) in 16S rRNA + S-adenosyl-L-homocysteine + H(+). In terms of biological role, specifically methylates the guanine in position 1207 of 16S rRNA in the 30S particle. The sequence is that of Ribosomal RNA small subunit methyltransferase C from Haemophilus influenzae (strain PittEE).